The primary structure comprises 491 residues: MIQSTRISMGLFFKYFLSLTKIDPGQNYISLPSIKSSTHIALLFMVSMGTQKLKAQSFFIFSLLLTLILFCITTLYNENTNVKLIPQMNYLMVVVALFFLNAVIFLFMLMKYFTNKQILPTLILSLAFLSGLIYLVETIVIIHKPINGSTLIQTKSNDVSIFYIFRQLSFICLTSLALFCYGKDNILDNNKKKTGILLLALIPFLVFPLLAHNLSSYNADYSLYVVDYCPDNHTATWGINYTKILVCLWAFLLFFIIMRTRLASELWPLIALLCLASLCCNLLLLTLDEYNYTIWYISRGIEVSSKLFVVSFLIYNIFQELQLSSKLAVHDVLTNIYNRRYFFNSVESLLSRPVVKDFCVMLVDINQFKRINAQWGHRVGDKVLVSIVDIIQQSIRPDDILARLEGEVFGLLFTELNSAQAKIIAERMRKNVELLTGFSNRYDVPEQMTISIGTVFSTGDTRNISLVMTEADKALREAKSEGGNKVIIHHI.

Topologically, residues 1–54 (MIQSTRISMGLFFKYFLSLTKIDPGQNYISLPSIKSSTHIALLFMVSMGTQKLK) are cytoplasmic. A helical membrane pass occupies residues 55–75 (AQSFFIFSLLLTLILFCITTL). At 76 to 89 (YNENTNVKLIPQMN) the chain is on the periplasmic side. The chain crosses the membrane as a helical span at residues 90 to 110 (YLMVVVALFFLNAVIFLFMLM). Over 111–121 (KYFTNKQILPT) the chain is Cytoplasmic. A helical membrane pass occupies residues 122-142 (LILSLAFLSGLIYLVETIVII). Over 143-158 (HKPINGSTLIQTKSND) the chain is Periplasmic. Residues 159–179 (VSIFYIFRQLSFICLTSLALF) form a helical membrane-spanning segment. The Cytoplasmic segment spans residues 180 to 193 (CYGKDNILDNNKKK). The helical transmembrane segment at 194-214 (TGILLLALIPFLVFPLLAHNL) threads the bilayer. Residues 215–236 (SSYNADYSLYVVDYCPDNHTAT) lie on the Periplasmic side of the membrane. A helical transmembrane segment spans residues 237–257 (WGINYTKILVCLWAFLLFFII). Residues 258-265 (MRTRLASE) are Cytoplasmic-facing. Residues 266–286 (LWPLIALLCLASLCCNLLLLT) form a helical membrane-spanning segment. Over 287–293 (LDEYNYT) the chain is Periplasmic. The helical transmembrane segment at 294 to 314 (IWYISRGIEVSSKLFVVSFLI) threads the bilayer. The Cytoplasmic segment spans residues 315–491 (YNIFQELQLS…GGNKVIIHHI (177 aa)). Residues 356–491 (KDFCVMLVDI…GGNKVIIHHI (136 aa)) form the GGDEF domain. Mg(2+) is bound by residues aspartate 364 and isoleucine 365. Substrate-binding residues include asparagine 372, histidine 377, and aspartate 381. A Mg(2+)-binding site is contributed by glutamate 407. Catalysis depends on glutamate 407, which acts as the Proton acceptor. Arginine 427 contacts substrate.

As to quaternary structure, homodimer. It depends on Mg(2+) as a cofactor.

The protein localises to the cell inner membrane. The catalysed reaction is 2 GTP = 3',3'-c-di-GMP + 2 diphosphate. The protein operates within purine metabolism; 3',5'-cyclic di-GMP biosynthesis. Functionally, catalyzes the synthesis of cyclic-di-GMP (c-di-GMP) via the condensation of 2 GTP molecules. The sequence is that of Probable diguanylate cyclase CdgI from Escherichia coli (strain K12).